The following is a 273-amino-acid chain: Phosphate import ATP-binding protein PstB (273 aa).

Residues 19–258 enclose the ABC transporter domain; it reads LSLQNVTISY…FNDTDKIFNA (240 aa). 51-58 lines the ATP pocket; the sequence is GPSGCGKS.

Belongs to the ABC transporter superfamily. Phosphate importer (TC 3.A.1.7) family. In terms of assembly, the complex is composed of two ATP-binding proteins (PstB), two transmembrane proteins (PstC and PstA) and a solute-binding protein (PstS).

The protein localises to the cell inner membrane. The catalysed reaction is phosphate(out) + ATP + H2O = ADP + 2 phosphate(in) + H(+). Part of the ABC transporter complex PstSACB involved in phosphate import. Responsible for energy coupling to the transport system. The protein is Phosphate import ATP-binding protein PstB of Synechococcus sp. (strain CC9605).